Reading from the N-terminus, the 145-residue chain is Functional amyloid chaperone FapA (145 aa).

An N-terminal signal peptide occupies residues 1-27; that stretch reads MRKRDKRLYHLLLVGCVLGSLSLTAQA.

Belongs to the FapA family. In terms of assembly, monomer in solution. Interacts with FapC but not FapB in vitro.

Its subcellular location is the periplasm. An intrinsically disordered chaperone for fibril amyloid FapC that guards against fibrillation, pro within the periplasm. Upon overexpression of the endogenous six-gene locus (fapA-fapF), cells form large clumps during liquid growth, make large amounts of biofilm and produce relatively unstable amyloid fibrils. In Pseudomonas putida (strain ATCC 700007 / DSM 6899 / JCM 31910 / BCRC 17059 / LMG 24140 / F1), this protein is Functional amyloid chaperone FapA.